A 636-amino-acid chain; its full sequence is Polyadenylate-binding protein 1 (636 aa).

Position 1 is an N-acetylmethionine (M1). RRM domains follow at residues 11 to 89 (ASLY…WSQR), 99 to 175 (GNIF…RFKS), 191 to 268 (TNVY…RAQK), and 294 to 370 (VNLY…LAQR). The tract at residues 166-289 (RKVFVGRFKS…FEQMKQDRIT (124 aa)) is UNR-binding. K299 is subject to N6-methyllysine. S315 bears the Phosphoserine mark. Phosphothreonine is present on T319. 4 positions are modified to omega-N-methylarginine: R385, R419, R432, and R436. Omega-N-methylated arginine; by CARM1 occurs at positions 455 and 460. Residues R475 and R481 each carry the omega-N-methylarginine modification. The residue at position 493 (R493) is an Asymmetric dimethylarginine; alternate. The residue at position 493 (R493) is a Dimethylated arginine; alternate. An Omega-N-methylarginine; alternate modification is found at R493. R506 is subject to Omega-N-methylarginine. K512 is subject to N6-acetyllysine. At R518 the chain carries Omega-N-methylarginine. The region spanning 542–619 (QEPLTASMLA…AVAVLQAHQA (78 aa)) is the PABC domain.

It belongs to the polyadenylate-binding protein type-1 family. In terms of assembly, may form homodimers. Component of a multisubunit autoregulatory ribonucleoprotein complex (ARC), at least composed of IGF2BP1, PABPC1 and CSDE1. Directly interacts with IGF2BP1. Part of a complex associated with the FOS mCRD domain and consisting of HNRPD, SYNCRIP, PAIP1 and CSDE1/UNR. Interacts with PAIP1 and PAIP2 (via the PABPC1-interacting motifs PAM1 and PAM2). Interacts with PAIP1 with a 1:1 stoichiometry and with PAIP2 with a 1:2 stoichiometry. The interaction with CSDE1 is direct and RNA-independent. Found in a mRNP complex with YBX2. Interacts with TENT2/GLD2. Identified in the spliceosome C complex. Identified in a mRNP complex, at least composed of DHX9, DDX3X, ELAVL1, HNRNPU, IGF2BP1, ILF3, PABPC1, PCBP2, PTBP2, STAU1, STAU2, SYNCRIP and YBX1. The interaction with DDX3X is direct and RNA-independent. This interaction increases in stressed cells and decreases during cell recovery. Identified in a IGF2BP1-dependent mRNP granule complex containing untranslated mRNAs. Interacts with NXF1/TAP. Interacts with PIWIL1. Interacts with AGO1, AGO2, GSPT1 and GSPT2. Interacts with LARP4B. Interacts (via the second and third RRM domains and the C-terminus) with PAIP2B (via central acidic portion and C-terminus). Forms a complex with LARP1 and SHFL. Interacts with LARP4. Interacts with ZFC3H1 in a RNase-sensitive manner. Interacts with TRIM71 (via NHL repeats) in an RNA-dependent manner. Interacts with TENT5C; the interaction has no effect on TENT5C poly(A) polymerase function. Interacts with G3BP1 and G3BP2. Interacts with ENDOV; the interaction is RNA-dependent and stimulates ENDOV activity. Interacts with UPF1; the interaction is RNA-dependent. Interacts with IGF2BP2 and IGF2BP3. May interact with SETX. Interacts with RBM46. Interacts with PAN3 isoform 1/Pan3L and isoform 3/Pan3S (via N-terminus); interaction with isoform 1 is less efficient than with isoform 3. Phosphorylated by MAPKAPK2. Post-translationally, methylated by CARM1. Arg-493 is dimethylated, probably to asymmetric dimethylarginine.

It localises to the cytoplasm. Its subcellular location is the stress granule. The protein resides in the nucleus. The protein localises to the cell projection. It is found in the lamellipodium. Binds the poly(A) tail of mRNA, including that of its own transcript, and regulates processes of mRNA metabolism such as pre-mRNA splicing and mRNA stability. Its function in translational initiation regulation can either be enhanced by PAIP1 or repressed by PAIP2. Can probably bind to cytoplasmic RNA sequences other than poly(A) in vivo. Binds to N6-methyladenosine (m6A)-containing mRNAs and contributes to MYC stability by binding to m6A-containing MYC mRNAs. Involved in translationally coupled mRNA turnover. Implicated with other RNA-binding proteins in the cytoplasmic deadenylation/translational and decay interplay of the FOS mRNA mediated by the major coding-region determinant of instability (mCRD) domain. Involved in regulation of nonsense-mediated decay (NMD) of mRNAs containing premature stop codons; for the recognition of premature termination codons (PTC) and initiation of NMD a competitive interaction between UPF1 and PABPC1 with the ribosome-bound release factors is proposed. By binding to long poly(A) tails, may protect them from uridylation by ZCCHC6/ZCCHC11 and hence contribute to mRNA stability. The polypeptide is Polyadenylate-binding protein 1 (Pabpc1) (Rattus norvegicus (Rat)).